We begin with the raw amino-acid sequence, 102 residues long: Urease subunit beta (102 aa).

Belongs to the urease beta subunit family. As to quaternary structure, heterotrimer of UreA (gamma), UreB (beta) and UreC (alpha) subunits. Three heterotrimers associate to form the active enzyme.

The protein resides in the cytoplasm. The enzyme catalyses urea + 2 H2O + H(+) = hydrogencarbonate + 2 NH4(+). The protein operates within nitrogen metabolism; urea degradation; CO(2) and NH(3) from urea (urease route): step 1/1. The chain is Urease subunit beta from Opitutus terrae (strain DSM 11246 / JCM 15787 / PB90-1).